A 231-amino-acid chain; its full sequence is 7-cyano-7-deazaguanine synthase (231 aa).

ATP is bound at residue 8 to 18 (FSGGQDSTTCL). Residues Cys188, Cys197, Cys200, and Cys203 each coordinate Zn(2+).

The protein belongs to the QueC family. Zn(2+) serves as cofactor.

The enzyme catalyses 7-carboxy-7-deazaguanine + NH4(+) + ATP = 7-cyano-7-deazaguanine + ADP + phosphate + H2O + H(+). Its pathway is purine metabolism; 7-cyano-7-deazaguanine biosynthesis. Its function is as follows. Catalyzes the ATP-dependent conversion of 7-carboxy-7-deazaguanine (CDG) to 7-cyano-7-deazaguanine (preQ(0)). This Escherichia coli (strain ATCC 8739 / DSM 1576 / NBRC 3972 / NCIMB 8545 / WDCM 00012 / Crooks) protein is 7-cyano-7-deazaguanine synthase.